The primary structure comprises 231 residues: 7-cyano-7-deazaguanine synthase (231 aa).

An ATP-binding site is contributed by 8-18 (FSGGQDSTTCL). Zn(2+) contacts are provided by Cys188, Cys197, Cys200, and Cys203.

It belongs to the QueC family. The cofactor is Zn(2+).

The enzyme catalyses 7-carboxy-7-deazaguanine + NH4(+) + ATP = 7-cyano-7-deazaguanine + ADP + phosphate + H2O + H(+). It participates in purine metabolism; 7-cyano-7-deazaguanine biosynthesis. In terms of biological role, catalyzes the ATP-dependent conversion of 7-carboxy-7-deazaguanine (CDG) to 7-cyano-7-deazaguanine (preQ(0)). This is 7-cyano-7-deazaguanine synthase from Salmonella agona (strain SL483).